The sequence spans 463 residues: Bifunctional protein HldE (463 aa).

Positions 1-315 are ribokinase; that stretch reads MRKILVIGDL…LILNQTHPKI (315 aa). 191 to 194 provides a ligand contact to ATP; the sequence is NRFE. The active site involves Asp260. The segment at 334-463 is cytidylyltransferase; that stretch reads FTNGCFDILH…IEKIKRAYND (130 aa).

The protein in the N-terminal section; belongs to the carbohydrate kinase PfkB family. It in the C-terminal section; belongs to the cytidylyltransferase family. As to quaternary structure, homodimer.

It carries out the reaction D-glycero-beta-D-manno-heptose 7-phosphate + ATP = D-glycero-beta-D-manno-heptose 1,7-bisphosphate + ADP + H(+). It catalyses the reaction D-glycero-beta-D-manno-heptose 1-phosphate + ATP + H(+) = ADP-D-glycero-beta-D-manno-heptose + diphosphate. It participates in nucleotide-sugar biosynthesis; ADP-L-glycero-beta-D-manno-heptose biosynthesis; ADP-L-glycero-beta-D-manno-heptose from D-glycero-beta-D-manno-heptose 7-phosphate: step 1/4. It functions in the pathway nucleotide-sugar biosynthesis; ADP-L-glycero-beta-D-manno-heptose biosynthesis; ADP-L-glycero-beta-D-manno-heptose from D-glycero-beta-D-manno-heptose 7-phosphate: step 3/4. Its function is as follows. Catalyzes the phosphorylation of D-glycero-D-manno-heptose 7-phosphate at the C-1 position to selectively form D-glycero-beta-D-manno-heptose-1,7-bisphosphate. Catalyzes the ADP transfer from ATP to D-glycero-beta-D-manno-heptose 1-phosphate, yielding ADP-D-glycero-beta-D-manno-heptose. This chain is Bifunctional protein HldE, found in Helicobacter acinonychis (strain Sheeba).